A 1295-amino-acid polypeptide reads, in one-letter code: MMEILRGSPALSAFRINKLLARFQAARLPVHNIYAEYVHFADLNAPLNDDEHAQLERLLKYGPALASHAPQGKLLLVTPRPGTISPWSSKATDIAHNCGLQQVNRLERGVAYYIEAGTLTNEQWQQVTAELHDRMMETVFFDLDDAEQLFAHHQPTPVTSVDLLGQGRQALIDANLRLGLALAEDEIDYLQDAFTKLGRNPNDIELYMFAQANSEHCRHKIFNADWIIDGEQQPKSLFRMIKNTFETTPDHVLSAYKDNAAVMEGSEVGRYFADHETGRYDFHQEPAHILMKVETHNHPTAISPWPGAATGSGGEIRDEGATGRGAKPKAGLVGFSVSNLRILGFEQPWEEDFGKPERIVTALDIMTEGPLGGAAFNNEFGRPALNGYFRTYEEKVNSHNGEELRGYHKPIMLAGGIGNIRADHVQKGEINVGAKLVVLGGPAMNIGLGGGAASSMASGQSDADLDFASVQRDNPEMERRCQEVIDRCWQLGDANPILFIHDVGAGGLSNAMPELVSDGGRGGKFELRDILSDEPGMSPLEIWCNESQERYVLAVAADQLPLFDELCKRERAPYAVIGEATEELHLSLHDRHFDNQPIDLPLDVLLGKTPKMTRDVQTLKAKGDALVREGITIADAVKRILHLPTVAEKTFLVTIGDRSVTGMVARDQMVGPWQVPVANCAVTTASLDSYYGEAMAIGERAPVALLDFAASARLAVGEALTNIAATQIGDIKRIKLSANWMAAAGHPGEDAGLYEAVKAVGEELCPALGLTIPVGKDSMSMKTRWQEGNEEREMTSPLSLVISAFARVEDVRHTITPQLSTEDNALLLIDLGKGNNALGATALAQVYRQLGDKPADVRDVAQLKGFYDAIQALVAQRKLLAYHDRSDGGLLVTLAEMAFAGHCGINADIASLGDDRLAALFNEELGAVIQVRAADREAVESVLAQHGLADCVHYVGQAVSGDRFVITANGETVFSESRTTLRVWWAETTWQMQRLRDNPECADQEHQAKSNDADPGLNVKLSFDINEDVAAPYIATGARPKVAVLREQGVNSHVEMAAAFHRAGFDAIDVHMSDLLTGRTGLEDFHALVACGGFSYGDVLGAGEGWAKSILFNDRVRDEFATFFHRPQTLALGVCNGCQMMSNLRELIPGSELWPRFVRNTSDRFEARFSLVEVTQSPSLLLQGMVGSQMPIAVSHGEGRVEVRDAAHLAALESKGLVALRYVDNFGKVTETYPANPNGSPNGITAVTTESGRVTIMMPHPERVFRTVSNSWHPENWGEDGPWMRIFRNARKQLG.

The tract at residues 305–327 is disordered; the sequence is WPGAATGSGGEIRDEGATGRGAK. ATP contacts are provided by residues 307–318 and Ala-678; that span reads GAATGSGGEIRD. 3 residues coordinate Mg(2+): Glu-718, Asn-722, and Asp-884. Ser-886 contributes to the ATP binding site. Residues 1042–1295 enclose the Glutamine amidotransferase type-1 domain; that stretch reads VAVLREQGVN…IFRNARKQLG (254 aa). Catalysis depends on Cys-1135, which acts as the Nucleophile. Residues His-1260 and Glu-1262 contribute to the active site.

The protein in the N-terminal section; belongs to the FGAMS family. In terms of assembly, monomer.

Its subcellular location is the cytoplasm. It carries out the reaction N(2)-formyl-N(1)-(5-phospho-beta-D-ribosyl)glycinamide + L-glutamine + ATP + H2O = 2-formamido-N(1)-(5-O-phospho-beta-D-ribosyl)acetamidine + L-glutamate + ADP + phosphate + H(+). The protein operates within purine metabolism; IMP biosynthesis via de novo pathway; 5-amino-1-(5-phospho-D-ribosyl)imidazole from N(2)-formyl-N(1)-(5-phospho-D-ribosyl)glycinamide: step 1/2. Phosphoribosylformylglycinamidine synthase involved in the purines biosynthetic pathway. Catalyzes the ATP-dependent conversion of formylglycinamide ribonucleotide (FGAR) and glutamine to yield formylglycinamidine ribonucleotide (FGAM) and glutamate. In Shigella boydii serotype 4 (strain Sb227), this protein is Phosphoribosylformylglycinamidine synthase.